Reading from the N-terminus, the 532-residue chain is Phosphoenolpyruvate carboxylase (532 aa).

Belongs to the PEPCase type 2 family. As to quaternary structure, homotetramer. Mg(2+) is required as a cofactor.

It carries out the reaction oxaloacetate + phosphate = phosphoenolpyruvate + hydrogencarbonate. Its function is as follows. Catalyzes the irreversible beta-carboxylation of phosphoenolpyruvate (PEP) to form oxaloacetate (OAA), a four-carbon dicarboxylic acid source for the tricarboxylic acid cycle. The polypeptide is Phosphoenolpyruvate carboxylase (Methanopyrus kandleri (strain AV19 / DSM 6324 / JCM 9639 / NBRC 100938)).